Here is a 500-residue protein sequence, read N- to C-terminus: MNYFPWLTIIVVFPIFAGSLIFFLPHKGNRVIRWYTICICILELLLTTYAFCYHFQSDDPLIQLVEDYKWINFFDFHWRLGIDGLSIGPILLTGFITTLATLAAWPVTRDSRLFHFLMLAMYSGQIGSFSSRDLLLFFIMWELELIPVYLLLCMWGGKKRLYSATKFILYTAGGSVFLLMGVLGLALYGSNEPTLNFETSVNQSYPVVLEIIFYIGFFIAFAVKSPIIPLHTWLPDTHGEAHYSTCMLLAGILLKMGAYGLIRINMELLPHAHSIFSPWLMIIGTIQIIYAALTSLGQRNLKKRIAYSSVSHMGFIIIGISSLTDTGLNGALLQIISHGFIGAALFFLAGTTYDRIRLVYLDEMGGIAIPMPKMFTMFSSFSMASLALPGMSGFVAELIVFFGIITGQKYLLIPKILITFVMAIGMILTPIYSLSMSRQMFYGYKLFNAPKDSFFDSGPRELFLSISIFLPVIGIGIYPDFVLSLAVDKVEVILSNFFYR.

The next 14 membrane-spanning stretches (helical) occupy residues 4–24, 35–55, 87–107, 113–130, 134–154, 167–187, 208–228, 242–262, 274–294, 305–325, 330–350, 386–406, 411–431, and 462–482; these read FPWLTIIVVFPIFAGSLIFFL, YTICICILELLLTTYAFCYHF, IGPILLTGFITTLATLAAWPV, LFHFLMLAMYSGQIGSFS, LLLFFIMWELELIPVYLLLCM, FILYTAGGSVFLLMGVLGLAL, VLEIIFYIGFFIAFAVKSPII, HYSTCMLLAGILLKMGAYGLI, SIFSPWLMIIGTIQIIYAALT, IAYSSVSHMGFIIIGISSLTD, GALLQIISHGFIGAALFFLAG, LALPGMSGFVAELIVFFGIIT, LLIPKILITFVMAIGMILTPI, and LFLSISIFLPVIGIGIYPDFV.

It belongs to the complex I subunit 4 family.

Its subcellular location is the plastid. It is found in the chloroplast thylakoid membrane. The enzyme catalyses a plastoquinone + NADH + (n+1) H(+)(in) = a plastoquinol + NAD(+) + n H(+)(out). It carries out the reaction a plastoquinone + NADPH + (n+1) H(+)(in) = a plastoquinol + NADP(+) + n H(+)(out). The polypeptide is NAD(P)H-quinone oxidoreductase chain 4, chloroplastic (ndhD) (Nicotiana tabacum (Common tobacco)).